The following is a 526-amino-acid chain: Zinc finger protein Helios (526 aa).

The tract at residues 28-94 is disordered; that stretch reads DLTSSTPNGQ…IESSEVADNR (67 aa). Polar residues predominate over residues 29 to 50; it reads LTSSTPNGQHASPSHMTSTNSV. S56 bears the Phosphoserine mark. The span at 61–77 shows a compositional bias: basic and acidic residues; that stretch reads DRQPLSREDEIRGHDEG. Phosphoserine is present on residues S78 and S79. A Glycyl lysine isopeptide (Lys-Gly) (interchain with G-Cter in SUMO2) cross-link involves residue K95. 4 C2H2-type zinc fingers span residues 112–134, 140–162, 168–190, and 196–219; these read LKCD…KRSH, FHCN…IKLH, FKCP…LRTH, and HKCN…ERCH. An N6-acetyllysine modification is found at K288. Residues 368–379 are compositionally biased toward basic and acidic residues; the sequence is ISRETSDSHENN. Residues 368–435 are disordered; sequence ISRETSDSHE…LNPKRKQSPA (68 aa). Glycyl lysine isopeptide (Lys-Gly) (interchain with G-Cter in SUMO2) cross-links involve residues K442 and K448. C2H2-type zinc fingers lie at residues 471 to 493 and 499 to 523; these read FKCE…MGCH and LECN…RGEH.

It belongs to the Ikaros C2H2-type zinc-finger protein family. In terms of assembly, can form homodimers. Interacts with IKZF4 and IKZF5. Expressed in outer hair cells (OHC) of the organ of Corti. Abundant in thymus, low expression in bone marrow and brain and no detectable expression in spleen, liver, kidney or muscle. Expressed in T-cells.

It localises to the nucleus. Functionally, transcriptional regulator required for outer hair cells (OHC) maturation and, consequently, for hearing. This chain is Zinc finger protein Helios (Ikzf2), found in Mus musculus (Mouse).